The chain runs to 90 residues: Small ribosomal subunit protein uS15c (90 aa).

This sequence belongs to the universal ribosomal protein uS15 family. In terms of assembly, part of the 30S ribosomal subunit.

The protein resides in the plastid. It is found in the chloroplast. The protein is Small ribosomal subunit protein uS15c (rps15) of Lotus japonicus (Lotus corniculatus var. japonicus).